The sequence spans 242 residues: Large ribosomal subunit protein uL1 (242 aa).

This sequence belongs to the universal ribosomal protein uL1 family. In terms of assembly, part of the 50S ribosomal subunit.

Its function is as follows. Binds directly to 23S rRNA. The L1 stalk is quite mobile in the ribosome, and is involved in E site tRNA release. Functionally, protein L1 is also a translational repressor protein, it controls the translation of the L11 operon by binding to its mRNA. This chain is Large ribosomal subunit protein uL1, found in Dictyoglomus thermophilum (strain ATCC 35947 / DSM 3960 / H-6-12).